We begin with the raw amino-acid sequence, 518 residues long: GMP synthase [glutamine-hydrolyzing] (518 aa).

One can recognise a Glutamine amidotransferase type-1 domain in the interval 6 to 200 (RLLIIDFGSQ…FVKLAGFKGD (195 aa)). The Nucleophile role is filled by C84. Residues H175 and E177 contribute to the active site. One can recognise a GMPS ATP-PPase domain in the interval 201 to 393 (WTMGAYREEA…LGLPDSFIGR (193 aa)). An ATP-binding site is contributed by 228 to 234 (SGGVDSS).

As to quaternary structure, homodimer.

The enzyme catalyses XMP + L-glutamine + ATP + H2O = GMP + L-glutamate + AMP + diphosphate + 2 H(+). It functions in the pathway purine metabolism; GMP biosynthesis; GMP from XMP (L-Gln route): step 1/1. In terms of biological role, catalyzes the synthesis of GMP from XMP. In Cereibacter sphaeroides (strain ATCC 17025 / ATH 2.4.3) (Rhodobacter sphaeroides), this protein is GMP synthase [glutamine-hydrolyzing].